The chain runs to 357 residues: Transcription factor HHO1 (357 aa).

Disordered regions lie at residues 94-117 and 171-198; these read TSIEEEVDDKDDDDEEHQSHETDI and NNNIKSPVTTSDGGSGGGGGRRGQRKNR. Residues 96-109 are compositionally biased toward acidic residues; the sequence is IEEEVDDKDDDDEE. A compositionally biased stretch (polar residues) spans 171–182; that stretch reads NNNIKSPVTTSD. The 61-residue stretch at 193-253 folds into the HTH myb-type domain; sequence GQRKNRRCWS…HLQKYRLHAR (61 aa). Positions 224–249 form a DNA-binding region, H-T-H motif; the sequence is PKQIRDIMKVDGLTNDEVKSHLQKYR.

Its subcellular location is the nucleus. Probable factor involved in nitrate and phosphate signaling in roots. Integrates nitrate and phosphate starvation responses and adaptation of root architecture, depending on nutrient availabilities. Acts downstream of the nitrate sensor and transporter NPF6.3/NRT1.1. Represses primary root development in response to phosphate deficiency conditions, only when nitrate is present. This chain is Transcription factor HHO1, found in Arabidopsis thaliana (Mouse-ear cress).